Reading from the N-terminus, the 363-residue chain is GDP-fucose transporter 1 (363 aa).

8 helical membrane passes run 33–55 (FLLRALQIALVVSLYWVTSISMV), 75–97 (VTFYQCLVTSLLCKGLSTLATCC), 110–129 (LKVARSVLPLSVVFIGMITF), 139–161 (VPFYNVGRSLTTVFNVLLSYLLL), 166–184 (SFYALLTCGVIIGGFWLGI), 194–213 (SLTGTIFGVLASLCVSLNAI), 226–248 (IWRLTFYNNVNACVLFLPLMIVL), and 263–285 (AHFWLMMTLGGLFGFAIGYVTGL).

The protein belongs to the TPT transporter family. SLC35C subfamily.

The protein localises to the golgi apparatus membrane. It catalyses the reaction GMP(out) + GDP-beta-L-fucose(in) = GMP(in) + GDP-beta-L-fucose(out). Antiporter specific for GDP-l-fucose and depending on the concomitant reverse transport of GMP. Involved in GDP-fucose import from the cytoplasm into the Golgi lumen. This chain is GDP-fucose transporter 1 (Slc35c1), found in Mus musculus (Mouse).